Consider the following 560-residue polypeptide: Serine/threonine-protein kinase TOS3 (560 aa).

The 295-residue stretch at 50–344 (FEILATLGNG…LADIKVHPFM (295 aa)) folds into the Protein kinase domain. ATP contacts are provided by residues 56-64 (LGNGQYGKV) and K79. Residue D189 is the Proton acceptor of the active site.

The protein belongs to the protein kinase superfamily. Ser/Thr protein kinase family. In terms of processing, autophosphorylated.

It carries out the reaction L-seryl-[protein] + ATP = O-phospho-L-seryl-[protein] + ADP + H(+). The catalysed reaction is L-threonyl-[protein] + ATP = O-phospho-L-threonyl-[protein] + ADP + H(+). In terms of biological role, one of the three SNF1 protein kinases (with SAK1 and ELM1) which are required for growth on nonfermentable carbon sources and nonpreferred sugars and for response to environmental stress. Activates SNF1 by phosphorylation of its activation-loop 'Thr-210'. Required for the regulation by SNF1 of the transcription of a large set of genes, the modification the activity of metabolic enzymes, and the control of various nutrient-responsive cellular developmental processes. Also phosphorylates GAL83, MIG1 and SIP2. In Saccharomyces cerevisiae (strain YJM789) (Baker's yeast), this protein is Serine/threonine-protein kinase TOS3 (TOS3).